Reading from the N-terminus, the 457-residue chain is D(1B) dopamine receptor (457 aa).

Residues 1–41 (MYQPFQHLDSDQVASWQSPEMLMNKSVSRESQRRKELVAGQ) are Extracellular-facing. An N-linked (GlcNAc...) asparagine glycan is attached at Asn-24. A helical membrane pass occupies residues 42-67 (IVTGSLLLLLIFWTLFGNILVCTAVM). Residues 68-78 (RFRHLRSRVTN) are Cytoplasmic-facing. A helical membrane pass occupies residues 79–105 (IFIVSLAVSDLLVALLVMPWKAVAEVA). Residues 106 to 114 (GHWPFGAFC) lie on the Extracellular side of the membrane. A disulfide bridge connects residues Cys-114 and Cys-199. The chain crosses the membrane as a helical span at residues 115 to 137 (DIWVAFDIMCSTASILNLCVISV). Residues 138-156 (DRYWAISSPFRYERKMTQR) are Cytoplasmic-facing. The chain crosses the membrane as a helical span at residues 157–181 (VALLMISTAWALSVLISFIPVQLSW). The Extracellular segment spans residues 182-205 (HKSETEDHLLSNHSTGNCDSSLNR). The helical transmembrane segment at 206 to 231 (TYAISSSLISFYIPVAIMIVTYTRIY) threads the bilayer. The Cytoplasmic portion of the chain corresponds to 232–282 (RIAQIQIKRISTLERAAEHAQSCRSNRVDSCSRHHQTSLRTSIKKETKVLK). The chain crosses the membrane as a helical span at residues 283-309 (TLSIIMGVFVCCWLPFFILNCMVPFCD). Residues 310–326 (RSPGHPQAGLPCVSETT) lie on the Extracellular side of the membrane. A helical membrane pass occupies residues 327–351 (FDIFVWFGWANSSLNPIIYAFNADF). Residues 352–457 (RKVFSSLLGC…ITPSMSNGIH (106 aa)) are Cytoplasmic-facing. Cys-361 carries S-palmitoyl cysteine lipidation.

This sequence belongs to the G-protein coupled receptor 1 family. Brain and kidney.

It is found in the cell membrane. Functionally, dopamine receptor whose activity is mediated by G proteins which activate adenylyl cyclase. The chain is D(1B) dopamine receptor (drd5) from Xenopus laevis (African clawed frog).